The primary structure comprises 75 residues: Small ribosomal subunit protein bS16 (75 aa).

It belongs to the bacterial ribosomal protein bS16 family.

This is Small ribosomal subunit protein bS16 from Campylobacter fetus subsp. fetus (strain 82-40).